Reading from the N-terminus, the 249-residue chain is Protein twisted gastrulation (249 aa).

An N-terminal signal peptide occupies residues 1-23; sequence MQLLCYFVILFVGIAPWSSLAND. N-linked (GlcNAc...) asparagine glycosylation is present at asparagine 199.

Belongs to the twisted gastrulation protein family. Component of a complex composed of dpp, sog and tsg. In terms of tissue distribution, first appears in stage 4 embryos, expressed in two domains: a broad mid-dorsal saddle and an anterior cap, expression between the domains is continuous across the dorsal midline. At stage 5, expression is refined into 4 graded stripes in the mid-dorsal region and a paired domain in the anterior region. During stages 7 and 8, anterior expression fades and the mid dorsal stripes are located between the anterior and posterior transverse furrow (ATF and PTF). Expressing cells become incorporated into the deepening PTF.

The protein resides in the secreted. In terms of biological role, involved in dorsal-ventral patterning. Required for specification of a narrow strip of dorsal midline cells that will give rise to the amnioserosa, but not for specification of dorsal ectoderm cells. Inhibits BMP signaling; enhances the binding of sog to dpp, thus enhancing the antagonistic activity of sog. The sequence is that of Protein twisted gastrulation (tsg) from Drosophila melanogaster (Fruit fly).